The primary structure comprises 260 residues: Flavin-dependent thymidylate synthase (260 aa).

One can recognise a ThyX domain in the interval 1–202 (MKIKLVSYSK…PRLFKYAGPN (202 aa)). FAD contacts are provided by residues S55, 79–81 (RHR), and Q87. Residues 76-79 (QLVR), 87-91 (QMSHR), and R141 contribute to the dUMP site. The short motif at 79-89 (RHRIASYTQMS) is the ThyX motif element. FAD is bound by residues 157 to 159 (NAR) and N163. R168 serves as a coordination point for dUMP. The active-site Involved in ionization of N3 of dUMP, leading to its activation is R168.

Belongs to the thymidylate synthase ThyX family. As to quaternary structure, homotetramer. It depends on FAD as a cofactor.

The catalysed reaction is dUMP + (6R)-5,10-methylene-5,6,7,8-tetrahydrofolate + NADPH + H(+) = dTMP + (6S)-5,6,7,8-tetrahydrofolate + NADP(+). Its pathway is pyrimidine metabolism; dTTP biosynthesis. Catalyzes the reductive methylation of 2'-deoxyuridine-5'-monophosphate (dUMP) to 2'-deoxythymidine-5'-monophosphate (dTMP) while utilizing 5,10-methylenetetrahydrofolate (mTHF) as the methyl donor, and NADPH and FADH(2) as the reductant. The sequence is that of Flavin-dependent thymidylate synthase from Sulfolobus acidocaldarius (strain ATCC 33909 / DSM 639 / JCM 8929 / NBRC 15157 / NCIMB 11770).